An 89-amino-acid chain; its full sequence is Neuropeptide F (89 aa).

The first 29 residues, methionine 1 to alanine 29, serve as a signal peptide directing secretion. Phenylalanine 61 bears the Phenylalanine amide mark. Residues glycine 65–arginine 89 constitute a propeptide that is removed on maturation.

The protein belongs to the NPY family.

It localises to the secreted. In terms of biological role, an integral part of the sensory system that mediates food signaling, providing the neural basis for the regulation of food response; coordinates larval foraging and social behavior changes during development. May have a hormonal role in females. In Anopheles gambiae (African malaria mosquito), this protein is Neuropeptide F.